We begin with the raw amino-acid sequence, 93 residues long: Pyrimidine/purine nucleoside phosphorylase (93 aa).

This sequence belongs to the nucleoside phosphorylase PpnP family.

The catalysed reaction is a purine D-ribonucleoside + phosphate = a purine nucleobase + alpha-D-ribose 1-phosphate. The enzyme catalyses adenosine + phosphate = alpha-D-ribose 1-phosphate + adenine. It carries out the reaction cytidine + phosphate = cytosine + alpha-D-ribose 1-phosphate. It catalyses the reaction guanosine + phosphate = alpha-D-ribose 1-phosphate + guanine. The catalysed reaction is inosine + phosphate = alpha-D-ribose 1-phosphate + hypoxanthine. The enzyme catalyses thymidine + phosphate = 2-deoxy-alpha-D-ribose 1-phosphate + thymine. It carries out the reaction uridine + phosphate = alpha-D-ribose 1-phosphate + uracil. It catalyses the reaction xanthosine + phosphate = alpha-D-ribose 1-phosphate + xanthine. Its function is as follows. Catalyzes the phosphorolysis of diverse nucleosides, yielding D-ribose 1-phosphate and the respective free bases. Can use uridine, adenosine, guanosine, cytidine, thymidine, inosine and xanthosine as substrates. Also catalyzes the reverse reactions. In Vibrio vulnificus (strain CMCP6), this protein is Pyrimidine/purine nucleoside phosphorylase.